A 156-amino-acid polypeptide reads, in one-letter code: Ribosome maturation factor RimP (156 aa).

The protein belongs to the RimP family.

It is found in the cytoplasm. Functionally, required for maturation of 30S ribosomal subunits. The protein is Ribosome maturation factor RimP of Oceanobacillus iheyensis (strain DSM 14371 / CIP 107618 / JCM 11309 / KCTC 3954 / HTE831).